Reading from the N-terminus, the 278-residue chain is Energy-coupling factor transporter ATP-binding protein EcfA (278 aa).

Residues 4–239 (LETRDLKYSY…SETVRSANLR (236 aa)) enclose the ABC transporter domain. 37-44 (GPNGAGKS) is an ATP binding site.

This sequence belongs to the ABC transporter superfamily. Energy-coupling factor EcfA family. In terms of assembly, forms a stable energy-coupling factor (ECF) transporter complex composed of 2 membrane-embedded substrate-binding proteins (S component), 2 ATP-binding proteins (A component) and 2 transmembrane proteins (T component).

It localises to the cell membrane. ATP-binding (A) component of a common energy-coupling factor (ECF) ABC-transporter complex. Unlike classic ABC transporters this ECF transporter provides the energy necessary to transport a number of different substrates. This chain is Energy-coupling factor transporter ATP-binding protein EcfA, found in Methanococcus maripaludis (strain DSM 14266 / JCM 13030 / NBRC 101832 / S2 / LL).